A 365-amino-acid polypeptide reads, in one-letter code: N-acetylgalactosamine-N,N'-diacetylbacillosaminyl-diphospho-undecaprenol 4-alpha-N-acetylgalactosaminyltransferase (365 aa).

Belongs to the glycosyltransferase group 1 family.

Its subcellular location is the cell inner membrane. It catalyses the reaction N-acetyl-alpha-D-galactosaminyl-(1-&gt;3)-N,N'-diacetyl-alpha-D-bacillosaminyl-tri-trans,hepta-cis-undecaprenyl diphosphate + UDP-N-acetyl-alpha-D-galactosamine = N-acetyl-alpha-D-galactosaminyl-(1-&gt;4)-N-acetyl-alpha-D-galactosaminyl-(1-&gt;3)-N,N'-diacetyl-alpha-D-bacillosaminyl-tri-trans,heptacis-undecaprenyl diphosphate + UDP + H(+). The protein operates within protein modification; protein glycosylation. Its function is as follows. Adds a GalNAc residue on to the Und-PP-Bac2,4diNAc-GalNAc disaccharide in the N-linked protein glycosylation pathway. Transfers the third sugar in the heptasaccharide biosynthesis. The protein is N-acetylgalactosamine-N,N'-diacetylbacillosaminyl-diphospho-undecaprenol 4-alpha-N-acetylgalactosaminyltransferase (pglJ) of Campylobacter jejuni subsp. jejuni serotype O:2 (strain ATCC 700819 / NCTC 11168).